A 470-amino-acid chain; its full sequence is 6-phosphofructo-2-kinase/fructose-2,6-bisphosphatase (470 aa).

Positions 1–249 are 6-phosphofructo-2-kinase; that stretch reads MAAVASGQLT…VYYLMNTHVT (249 aa). At Ser31 the chain carries Phosphoserine; by PKA. 47-55 contacts ATP; that stretch reads GLRRPGKTY. Positions 80 and 104 each coordinate beta-D-fructose 6-phosphate. Asp130 is an active-site residue. Residues Thr132 and Arg138 each coordinate beta-D-fructose 6-phosphate. The active site involves Cys160. Position 169–174 (169–174) interacts with ATP; it reads NIKQVK. Beta-D-fructose 6-phosphate-binding residues include Lys174, Arg195, and Tyr199. Residues 250–469 are fructose-2,6-bisphosphatase; sequence PRAIYLSRHG…AEALVTVPEH (220 aa). Arg257 serves as a coordination point for beta-D-fructose 2,6-bisphosphate. His258 acts as the Tele-phosphohistidine intermediate in catalysis. Beta-D-fructose 2,6-bisphosphate is bound by residues Asn264 and Gly270. The Proton donor/acceptor role is filled by Glu327. Beta-D-fructose 2,6-bisphosphate-binding residues include Tyr338, Arg352, Lys356, Tyr367, Gln393, and Arg397. 349–352 lines the ATP pocket; sequence FALR. Residues 393 to 397 and Tyr429 each bind ATP; that span reads QAVMR.

In the C-terminal section; belongs to the phosphoglycerate mutase family. In terms of assembly, homodimer. Liver.

It catalyses the reaction beta-D-fructose 2,6-bisphosphate + H2O = beta-D-fructose 6-phosphate + phosphate. The enzyme catalyses beta-D-fructose 6-phosphate + ATP = beta-D-fructose 2,6-bisphosphate + ADP + H(+). Its activity is regulated as follows. Phosphorylation results in inhibition of the kinase activity. Synthesis and degradation of fructose 2,6-bisphosphate. The protein is 6-phosphofructo-2-kinase/fructose-2,6-bisphosphatase of Gallus gallus (Chicken).